Consider the following 355-residue polypeptide: (R,S)-reticuline 7-O-methyltransferase (355 aa).

S-adenosyl-L-methionine contacts are provided by residues 197-200 (VGGG), Asp-221, 221-222 (DL), 241-242 (DM), and Lys-255. Residue His-259 is the Proton acceptor of the active site.

Belongs to the class I-like SAM-binding methyltransferase superfamily. Cation-independent O-methyltransferase family. In terms of assembly, homodimer. As to expression, expressed in capsules, buds and stems, and at lower levels in leaves. Localized to parenchyma cells within the vascular bundle, but only to those cells distal to laticifers. In roots, found in the pericycle within the stele.

It catalyses the reaction (S)-reticuline + S-adenosyl-L-methionine = (S)-laudanine + S-adenosyl-L-homocysteine + H(+). The enzyme catalyses (R)-reticuline + S-adenosyl-L-methionine = (R)-laudanine + S-adenosyl-L-homocysteine + H(+). Functionally, catalyzes the transfer of a methyl group to reticuline to form laudanine. Methylates the simple catechols guaiacol and isovanillic acid as well as the tetrahydrobenzylisoquinolines (R)-reticuline, (S)-reticuline, (R,S)-orientaline, (R)-protosinomenine and (R,S)-isoorientaline. Involved in the production of laudanine. The polypeptide is (R,S)-reticuline 7-O-methyltransferase (Papaver somniferum (Opium poppy)).